Consider the following 172-residue polypeptide: 18.6 kDa class III heat shock protein (172 aa).

The interval 29–54 (RRSAGDHAHHAAHGHGQHRISGIGGG) is disordered. Residues 48-172 (ISGIGGGAPV…KTKSVQVTIA (125 aa)) enclose the sHSP domain.

Belongs to the small heat shock protein (HSP20) family. May form oligomeric structures.

It is found in the cytoplasm. This Oryza sativa subsp. japonica (Rice) protein is 18.6 kDa class III heat shock protein (HSP18.6).